Consider the following 129-residue polypeptide: Small ribosomal subunit protein uS11 (129 aa).

It belongs to the universal ribosomal protein uS11 family. As to quaternary structure, part of the 30S ribosomal subunit. Interacts with proteins S7 and S18. Binds to IF-3.

Its function is as follows. Located on the platform of the 30S subunit, it bridges several disparate RNA helices of the 16S rRNA. Forms part of the Shine-Dalgarno cleft in the 70S ribosome. The polypeptide is Small ribosomal subunit protein uS11 (Sodalis glossinidius (strain morsitans)).